The following is a 191-amino-acid chain: Photosystem I assembly protein Ycf4 (191 aa).

The next 2 membrane-spanning stretches (helical) occupy residues 33–53 (LLAV…LSSY) and 74–94 (LVMG…WAMI).

Belongs to the Ycf4 family.

It is found in the cellular thylakoid membrane. Its function is as follows. Seems to be required for the assembly of the photosystem I complex. The sequence is that of Photosystem I assembly protein Ycf4 from Prochlorococcus marinus (strain MIT 9303).